Here is a 454-residue protein sequence, read N- to C-terminus: Bifunctional protein GlmU (454 aa).

A pyrophosphorylase region spans residues 1–226 (MSLNVVILAA…PIETEGANNR (226 aa)). Residues 8-11 (LAAG), lysine 22, glutamine 73, 78-79 (GT), 100-102 (YGD), glycine 137, glutamate 151, asparagine 166, and asparagine 224 each bind UDP-N-acetyl-alpha-D-glucosamine. Aspartate 102 lines the Mg(2+) pocket. Asparagine 224 contacts Mg(2+). Residues 227 to 247 (VQLAALERAYQARRAEELMLA) are linker. The interval 248-454 (GANLRDPARI…GWQRPVKKPK (207 aa)) is N-acetyltransferase. UDP-N-acetyl-alpha-D-glucosamine contacts are provided by arginine 330 and lysine 348. Histidine 360 acts as the Proton acceptor in catalysis. Tyrosine 363 and asparagine 374 together coordinate UDP-N-acetyl-alpha-D-glucosamine. Acetyl-CoA contacts are provided by residues alanine 377, 383–384 (NY), serine 402, alanine 420, and arginine 437.

It in the N-terminal section; belongs to the N-acetylglucosamine-1-phosphate uridyltransferase family. In the C-terminal section; belongs to the transferase hexapeptide repeat family. As to quaternary structure, homotrimer. The cofactor is Mg(2+).

Its subcellular location is the cytoplasm. The catalysed reaction is alpha-D-glucosamine 1-phosphate + acetyl-CoA = N-acetyl-alpha-D-glucosamine 1-phosphate + CoA + H(+). It carries out the reaction N-acetyl-alpha-D-glucosamine 1-phosphate + UTP + H(+) = UDP-N-acetyl-alpha-D-glucosamine + diphosphate. Its pathway is nucleotide-sugar biosynthesis; UDP-N-acetyl-alpha-D-glucosamine biosynthesis; N-acetyl-alpha-D-glucosamine 1-phosphate from alpha-D-glucosamine 6-phosphate (route II): step 2/2. The protein operates within nucleotide-sugar biosynthesis; UDP-N-acetyl-alpha-D-glucosamine biosynthesis; UDP-N-acetyl-alpha-D-glucosamine from N-acetyl-alpha-D-glucosamine 1-phosphate: step 1/1. It functions in the pathway bacterial outer membrane biogenesis; LPS lipid A biosynthesis. In terms of biological role, catalyzes the last two sequential reactions in the de novo biosynthetic pathway for UDP-N-acetylglucosamine (UDP-GlcNAc). The C-terminal domain catalyzes the transfer of acetyl group from acetyl coenzyme A to glucosamine-1-phosphate (GlcN-1-P) to produce N-acetylglucosamine-1-phosphate (GlcNAc-1-P), which is converted into UDP-GlcNAc by the transfer of uridine 5-monophosphate (from uridine 5-triphosphate), a reaction catalyzed by the N-terminal domain. The polypeptide is Bifunctional protein GlmU (Shewanella amazonensis (strain ATCC BAA-1098 / SB2B)).